Consider the following 143-residue polypeptide: Spanin, inner membrane subunit (143 aa).

The Cytoplasmic portion of the chain corresponds to M1–K7. The helical; Signal-anchor for type II membrane protein transmembrane segment at L8–L24 threads the bilayer. At G25–K143 the chain is on the periplasmic side.

This sequence belongs to the T7likevirus i-spanin family. As to quaternary structure, interacts (via C-terminus) with the spanin outer lipoprotein subunit (o-spanin) (via C-terminus). Part of the spanin complex which spans the entire periplasmic space. The spanin complex is composed of spanin inner membrane subunit and spanin outer membrane subunit.

The protein localises to the host cell inner membrane. In terms of biological role, component of the spanin complex that disrupts the host outer membrane and participates in cell lysis during virus exit. The spanin complex conducts the final step in host lysis by disrupting the outer membrane after holin and endolysin action have permeabilized the inner membrane and degraded the host peptidoglycans. Host outer membrane disruption is possibly due to local fusion between the inner and outer membrane performed by the spanin complex. The protein is Spanin, inner membrane subunit of Escherichia coli (Bacteriophage T7).